A 306-amino-acid polypeptide reads, in one-letter code: Aspartate carbamoyltransferase catalytic subunit (306 aa).

The carbamoyl phosphate site is built by R55 and T56. Residue K85 participates in L-aspartate binding. Residues R106, H133, and Q136 each contribute to the carbamoyl phosphate site. Positions 166 and 228 each coordinate L-aspartate. Positions 264 and 265 each coordinate carbamoyl phosphate.

This sequence belongs to the aspartate/ornithine carbamoyltransferase superfamily. ATCase family. Heterododecamer (2C3:3R2) of six catalytic PyrB chains organized as two trimers (C3), and six regulatory PyrI chains organized as three dimers (R2).

The catalysed reaction is carbamoyl phosphate + L-aspartate = N-carbamoyl-L-aspartate + phosphate + H(+). The protein operates within pyrimidine metabolism; UMP biosynthesis via de novo pathway; (S)-dihydroorotate from bicarbonate: step 2/3. In terms of biological role, catalyzes the condensation of carbamoyl phosphate and aspartate to form carbamoyl aspartate and inorganic phosphate, the committed step in the de novo pyrimidine nucleotide biosynthesis pathway. This chain is Aspartate carbamoyltransferase catalytic subunit, found in Serratia marcescens.